The sequence spans 553 residues: MFCIQCEQTIQTPAVKGCSFAQGMCGKTSEVSDLQDVLVYTLQGVSFWASKALEFNIINDEINQWAPKAFFSTLTNVNFDPERILELTSQAANYKALLKEQVMSAATLSNTNLADIPAVANFELPNSAEAILAFAPQVAVNRGKDQVHEDVIGLRLLCLYGLKGAAAYMEHARVLEQTNNDIYAEYHEIMAWLGTDPEDLGELLDCSMRIGLMNYKVMEMLDQGETTTFGHPEPTTVNVKPVKGKCILVSGHDLHDLEKILQQTEGKGINVYTNGEMLPAHGYPELKKYPHLVGNYGSAWQNQQKEFANFPGAIVMTSNCLLNPNVGQYADRLFTRSIVGWPGVAHIEGDDFSQVIECALAQDGFQHDEIEHHITVGFSRNALMNAAPAVIDQVKQGNIKHFFLVGGCDGDKAERSYYTDFTAEAPEDTLILTLACGKFRFNKNTFGDINGIPRLLDVGQCNDAYSAIQLALALAKEFDCDINELPLTLVLSWFEQKAIVILLTLFALGVKGIYTGPTAPAFLTPNLIAIIQEKFDMRSIGNVQDDLKAILAA.

The [2Fe-2S] cluster site is built by Cys-3, Cys-6, Cys-18, and Cys-25. Hybrid [4Fe-2O-2S] cluster-binding residues include His-252, Glu-276, Cys-320, Cys-408, Cys-436, Cys-461, Glu-495, and Lys-497. Cys-408 is subject to Cysteine persulfide.

This sequence belongs to the HCP family. [2Fe-2S] cluster is required as a cofactor. The cofactor is hybrid [4Fe-2O-2S] cluster.

The protein resides in the cytoplasm. The enzyme catalyses A + NH4(+) + H2O = hydroxylamine + AH2 + H(+). Functionally, catalyzes the reduction of hydroxylamine to form NH(3) and H(2)O. In Vibrio parahaemolyticus serotype O3:K6 (strain RIMD 2210633), this protein is Hydroxylamine reductase.